We begin with the raw amino-acid sequence, 286 residues long: Diaminopimelate epimerase (286 aa).

Asn-13 and Asn-66 together coordinate substrate. Cys-75 acts as the Proton donor in catalysis. Substrate is bound by residues 76–77, Asn-165, Asn-198, and 216–217; these read GN and ER. The active-site Proton acceptor is the Cys-225. 226–227 contributes to the substrate binding site; that stretch reads GT.

It belongs to the diaminopimelate epimerase family. Homodimer.

The protein resides in the cytoplasm. It catalyses the reaction (2S,6S)-2,6-diaminopimelate = meso-2,6-diaminopimelate. Its pathway is amino-acid biosynthesis; L-lysine biosynthesis via DAP pathway; DL-2,6-diaminopimelate from LL-2,6-diaminopimelate: step 1/1. In terms of biological role, catalyzes the stereoinversion of LL-2,6-diaminopimelate (L,L-DAP) to meso-diaminopimelate (meso-DAP), a precursor of L-lysine and an essential component of the bacterial peptidoglycan. The protein is Diaminopimelate epimerase of Thermosynechococcus vestitus (strain NIES-2133 / IAM M-273 / BP-1).